We begin with the raw amino-acid sequence, 294 residues long: ATP synthase gamma chain (294 aa).

It belongs to the ATPase gamma chain family. In terms of assembly, F-type ATPases have 2 components, CF(1) - the catalytic core - and CF(0) - the membrane proton channel. CF(1) has five subunits: alpha(3), beta(3), gamma(1), delta(1), epsilon(1). CF(0) has three main subunits: a, b and c.

Its subcellular location is the cell membrane. In terms of biological role, produces ATP from ADP in the presence of a proton gradient across the membrane. The gamma chain is believed to be important in regulating ATPase activity and the flow of protons through the CF(0) complex. The polypeptide is ATP synthase gamma chain (Opitutus terrae (strain DSM 11246 / JCM 15787 / PB90-1)).